The sequence spans 2115 residues: Nuclear mitotic apparatus protein 1 (2115 aa).

Positions 1-212 (MTLHATRGAA…SPMGDILQTP (212 aa)) are head (Globular). Serine 162 bears the Phosphoserine mark. At threonine 163 the chain carries Phosphothreonine. Phosphoserine is present on residues serine 169 and serine 203. A Phosphothreonine modification is found at threonine 211. Residues 213 to 1699 (QFQMRRLKKQ…ADQQLRDLGK (1487 aa)) are a coiled coil. Serine 271 is modified (phosphoserine). The residue at position 379 (lysine 379) is an N6-acetyllysine. A phosphoserine mark is found at serine 388 and serine 395. Low complexity predominate over residues 549–560 (LRHQVEQLSSSL). Disordered stretches follow at residues 549–593 (LRHQ…EERE) and 746–766 (LVEQ…GRKG). Residues 561–581 (KQKEQQLKEVAEKQEATRQDH) show a composition bias toward basic and acidic residues. Phosphoserine is present on serine 820. Lysine 891 carries the N6-acetyllysine modification. 2 stretches are compositionally biased toward basic and acidic residues: residues 926–950 (AGEQ…RQPE) and 996–1013 (QEER…TQER). Disordered regions lie at residues 926-958 (AGEQ…QQGR) and 988-1013 (LMES…TQER). Threonine 1047 carries the phosphothreonine; by PLK1 modification. Positions 1090–1102 (LKEQLAKKEKEHA) are enriched in basic and acidic residues. Disordered regions lie at residues 1090–1225 (LKEQ…RKNS) and 1275–1296 (ETAS…EVQS). Composition is skewed to low complexity over residues 1103 to 1112 (SGSGAQSEAA) and 1133 to 1142 (EQQCQKQQEQ). Positions 1145–1163 (SLERSLEAERASRAERDSA) are enriched in basic and acidic residues. Serine 1187 carries the post-translational modification Phosphoserine. Positions 1198–1224 (KVQDHSKAEDEWKAQVARGRQEAERKN) are enriched in basic and acidic residues. Serine 1225 is modified (phosphoserine). Positions 1283-1296 (AAERSSALREEVQS) are enriched in basic and acidic residues. Lysine 1511 carries the post-translational modification N6-acetyllysine. At serine 1601 the chain carries Phosphoserine. Lysine 1699 is covalently cross-linked (Glycyl lysine isopeptide (Lys-Gly) (interchain with G-Cter in SUMO2)). The interval 1699–1876 (KFQVATDALK…NSALLSLPGY (178 aa)) is membrane-binding domain 1. Residues 1700–2115 (FQVATDALKS…TPRAKGKAKH (416 aa)) form a tail (Globular) region. Residues serine 1721, serine 1724, and serine 1728 each carry the phosphoserine modification. The tract at residues 1734–1761 (PLSITSKLPRTQPDGTSVPGEPASPISQ) is disordered. Over residues 1735-1748 (LSITSKLPRTQPDG) the composition is skewed to polar residues. A Tankyrase-binding domain motif is present at residues 1742 to 1748 (PRTQPDG). A phosphoserine mark is found at serine 1757 and serine 1760. Lysine 1766 participates in a covalent cross-link: Glycyl lysine isopeptide (Lys-Gly) (interchain with G-Cter in SUMO1); alternate. Lysine 1766 participates in a covalent cross-link: Glycyl lysine isopeptide (Lys-Gly) (interchain with G-Cter in SUMO2); alternate. Serine 1769 and serine 1772 each carry phosphoserine; by PLK1. The residue at position 1774 (tyrosine 1774) is a Phosphotyrosine. Residue threonine 1776 is modified to Phosphothreonine. Serine 1788 carries the phosphoserine modification. The 4.1-binding domain stretch occupies residues 1788–1810 (SSLDSLGDVFLDSGRKTRSARRR). Serine 1789 bears the Phosphoserine; by PLK1 mark. A phosphoserine mark is found at serine 1792 and serine 1800. At threonine 1804 the chain carries Phosphothreonine. A Glycyl lysine isopeptide (Lys-Gly) (interchain with G-Cter in SUMO2) cross-link involves residue lysine 1822. 2 disordered regions span residues 1826–1901 (EEPD…GRNS) and 1955–2115 (EMKT…KAKH). Phosphoserine is present on residues serine 1830 and serine 1833. A compositionally biased stretch (polar residues) spans 1830–1857 (SANSSFYSTRSAPASQASLRATSSTQSL). A Phosphoserine; by PLK1 modification is found at serine 1834. Tyrosine 1836 carries the phosphotyrosine modification. Position 1840 is a phosphoserine (serine 1840). Position 1844 is a phosphoserine; alternate (serine 1844). O-linked (GlcNAc) serine; alternate glycosylation occurs at serine 1844. Phosphoserine occurs at positions 1862 and 1887. Positions 1879-1891 (TTRSSARRSQAGV) are enriched in polar residues. The tubulin-binding domain stretch occupies residues 1882–1985 (SSARRSQAGV…AEGTGITTRQ (104 aa)). The interval 1892 to 1926 (SSGAPPGRNSFYMGTCQDEPEQLDDWNRIAELQQR) is GPSM2-binding domain. Positions 1955-1966 (EMKTGDPQETLR) are enriched in basic and acidic residues. At serine 1969 the chain carries Phosphoserine. Positions 1981 to 2060 (ITTRQQRKRV…SILNTPKKLG (80 aa)) are membrane-binding domain 2. Positions 1984-1989 (RQQRKR) match the Nuclear localization signal motif. At serine 1991 the chain carries Phosphoserine. The residue at position 2000 (threonine 2000) is a Phosphothreonine. Serine 2003 is modified (phosphoserine). Phosphothreonine; by CDK1 is present on threonine 2015. Basic and acidic residues predominate over residues 2015–2032 (TPRDRHEGRKQSTTEAQK). Serine 2047 carries the post-translational modification Phosphoserine. Threonine 2055 carries the phosphothreonine; by CDK1 modification. 2 positions are modified to phosphoserine: serine 2062 and serine 2077. At serine 2087 the chain carries Phosphoserine; by CDK1. A compositionally biased stretch (low complexity) spans 2089–2108 (RIATTTASAATAAAIGATPR). Threonine 2106 carries the post-translational modification Phosphothreonine; by CDK1.

In terms of assembly, homodimer. Also forms multiarm oligomers by association of C-terminal tail domains, oligomers may further assemble to form a hexagonal nuclear lattice-like network. Associates with the dynein-dynactin complex; this association promotes the transport and accumulation of NUMA1 at the mitotic spindle poles that is inhibited by the BRISC complex in a PLK1-dependent manner. Part of a spindle orientation complex at least composed of GNAI1, GPSM2 and NUMA1. Interacts (via C-terminus) with microtubules (MTs); this interaction is direct and promotes both MT bundle formation and stability in a dynein-dynactin complex- and CDK1-independent manner. Interacts with EPB41 and EPB41L2; these interactions are negatively regulated by CDK1 during metaphase and are important for anaphase-specific localization of NUMA1 in symmetrically dividing cells. Interacts (via C-terminus) with GPSM2 (via TPR repeats); this interaction is direct, prevented by competitive binding of INSC, is inhibited in a PLK1-dependent manner, blocks the association of NUMA1 with MTs and inhibits NUMA1-induced MT bundle formation, prevents the association of NUMA1 with SPAG5, induces mitotic spindle pole localization of GPSM2, both metaphase cell cortex localization of NUMA1 and mitotic spindle organization. Does not interact with GPSM2 during anaphase. Interacts (via C-terminus) with the nuclear importin alpha/importin beta receptor; this interaction is inhibited by RanGTP. Interacts (via C-terminus) with KPNB1; this interaction is inhibited by RanGTP and the BRISC complex. Interacts with ABRAXAS2 and the BRISC complex; these interactions regulate mitotic spindle assembly. Interacts (via N-terminal end of the coiled-coil domain) with RAE1; this interaction promotes mitotic spindle formation. Interacts (via C-terminus) with SPAG5 (via C-terminus); this interaction promotes the recruitment of SPAG5 to the MTs at spindle poles in a dynein-dynactin-dependent manner and regulates mitotic spindle organization and proper chromosome alignment during mitosis. Interacts with TNKS; this interaction occurs at the onset of mitosis. Interacts with TNKS2. Interacts with tubulin. Interacts with KHDC3L (via C-terminus). In terms of processing, phosphorylation and dephosphorylation on Thr-2055 regulates the extent of cortical NUMA1 and the dynein-dynactin complex localization during mitotic metaphase and anaphase. In metaphase, phosphorylation on Thr-2055 occurs in a kinase CDK1-dependent manner; this phosphorylation maintains low levels of cortical dynein-dynactin complex at metaphase, and hence proper spindle positioning. In anaphase, dephosphorylated on Thr-2055 by phosphatase PPP2CA; this dephosphorylation stimulates its membrane association and with the dynein-dynactin complex its enrichment at the cell cortex, and hence robust spindle elongation. Probably also phosphorylated on Thr-2015 and Ser-2087 by CDK1; these phosphorylations may regulate its cell cortex recruitment during metaphase and anaphase. Phosphorylated on Thr-1047, Ser-1769, Ser-1772, Ser-1789 and Ser-1834 by PLK1; these phosphorylations induce cortical dynein-dynactin complex dissociation from the NUMA1-GPSM2 complex and negatively regulates cortical dynein-dynactin complex localization. Post-translationally, ADP-ribosylated by TNKS at the onset of mitosis; ADP-ribosylation is not required for its localization to spindle poles. O-glycosylated during cytokinesis at sites identical or close to phosphorylation sites, this interferes with the phosphorylation status. In terms of processing, ubiquitinated with 'Lys-63'-linked polyubiquitin chains. Deubiquitination by the BRISC complex is important for the incorporation of NUMA1 into mitotic spindle poles and normal spindle pole function, probably by modulating interactions between NUMA1, dynein-dynactin complex and importin-beta.

It localises to the nucleus. The protein resides in the nucleoplasm. The protein localises to the nucleus matrix. Its subcellular location is the chromosome. It is found in the cytoplasm. It localises to the cytoskeleton. The protein resides in the microtubule organizing center. The protein localises to the centrosome. Its subcellular location is the spindle pole. It is found in the cell cortex. It localises to the cell membrane. The protein resides in the lateral cell membrane. The protein localises to the cytosol. Functionally, microtubule (MT)-binding protein that plays a role in the formation and maintenance of the spindle poles and the alignement and the segregation of chromosomes during mitotic cell division. Functions to tether the minus ends of MTs at the spindle poles, which is critical for the establishment and maintenance of the spindle poles. Plays a role in the establishment of the mitotic spindle orientation during metaphase and elongation during anaphase in a dynein-dynactin-dependent manner. In metaphase, part of a ternary complex composed of GPSM2 and G(i) alpha proteins, that regulates the recruitment and anchorage of the dynein-dynactin complex in the mitotic cell cortex regions situated above the two spindle poles, and hence regulates the correct oritentation of the mitotic spindle. During anaphase, mediates the recruitment and accumulation of the dynein-dynactin complex at the cell membrane of the polar cortical region through direct association with phosphatidylinositol 4,5-bisphosphate (PI(4,5)P2), and hence participates in the regulation of the spindle elongation and chromosome segregation. Also binds to other polyanionic phosphoinositides, such as phosphatidylinositol 3-phosphate (PIP), lysophosphatidic acid (LPA) and phosphatidylinositol triphosphate (PIP3), in vitro. Also required for proper orientation of the mitotic spindle during asymmetric cell divisions. Plays a role in mitotic MT aster assembly. Involved in anastral spindle assembly. Positively regulates TNKS protein localization to spindle poles in mitosis. Highly abundant component of the nuclear matrix where it may serve a non-mitotic structural role, occupies the majority of the nuclear volume. Required for epidermal differentiation and hair follicle morphogenesis. The sequence is that of Nuclear mitotic apparatus protein 1 from Homo sapiens (Human).